Reading from the N-terminus, the 350-residue chain is UDP-3-O-acylglucosamine N-acyltransferase (350 aa).

His-248 serves as the catalytic Proton acceptor.

This sequence belongs to the transferase hexapeptide repeat family. LpxD subfamily. Homotrimer.

It catalyses the reaction a UDP-3-O-[(3R)-3-hydroxyacyl]-alpha-D-glucosamine + a (3R)-hydroxyacyl-[ACP] = a UDP-2-N,3-O-bis[(3R)-3-hydroxyacyl]-alpha-D-glucosamine + holo-[ACP] + H(+). The protein operates within bacterial outer membrane biogenesis; LPS lipid A biosynthesis. Functionally, catalyzes the N-acylation of UDP-3-O-acylglucosamine using 3-hydroxyacyl-ACP as the acyl donor. Is involved in the biosynthesis of lipid A, a phosphorylated glycolipid that anchors the lipopolysaccharide to the outer membrane of the cell. The protein is UDP-3-O-acylglucosamine N-acyltransferase of Nostoc punctiforme (strain ATCC 29133 / PCC 73102).